The following is a 213-amino-acid chain: Large ribosomal subunit protein uL1 (213 aa).

Belongs to the universal ribosomal protein uL1 family.

The sequence is that of Large ribosomal subunit protein uL1 (RPL10A) from Chlamydomonas reinhardtii (Chlamydomonas smithii).